Consider the following 253-residue polypeptide: 5'/3'-nucleotidase SurE (253 aa).

Residues Asp-8, Asp-9, Ser-39, and Asn-92 each coordinate a divalent metal cation.

This sequence belongs to the SurE nucleotidase family. A divalent metal cation serves as cofactor.

It is found in the cytoplasm. It carries out the reaction a ribonucleoside 5'-phosphate + H2O = a ribonucleoside + phosphate. It catalyses the reaction a ribonucleoside 3'-phosphate + H2O = a ribonucleoside + phosphate. The catalysed reaction is [phosphate](n) + H2O = [phosphate](n-1) + phosphate + H(+). Functionally, nucleotidase with a broad substrate specificity as it can dephosphorylate various ribo- and deoxyribonucleoside 5'-monophosphates and ribonucleoside 3'-monophosphates with highest affinity to 3'-AMP. Also hydrolyzes polyphosphate (exopolyphosphatase activity) with the preference for short-chain-length substrates (P20-25). Might be involved in the regulation of dNTP and NTP pools, and in the turnover of 3'-mononucleotides produced by numerous intracellular RNases (T1, T2, and F) during the degradation of various RNAs. The sequence is that of 5'/3'-nucleotidase SurE from Klebsiella pneumoniae (strain 342).